The chain runs to 311 residues: Putative dihydroorotate dehydrogenase A (fumarate) (311 aa).

Substrate contacts are provided by residues Lys45, 69–73 (NSMGL), and Asn128. FMN is bound at residue 45–46 (KT). Asn128 contributes to the FMN binding site. Residue Cys131 is the Nucleophile of the active site. FMN contacts are provided by Lys165 and Val193. Position 194-195 (194-195 (NS)) interacts with substrate. FMN-binding positions include Gly220, 248-249 (GG), and 270-271 (GT).

It belongs to the dihydroorotate dehydrogenase family. Type 1 subfamily. Homodimer. Requires FMN as cofactor.

The protein localises to the cytoplasm. It catalyses the reaction (S)-dihydroorotate + fumarate = orotate + succinate. Its pathway is pyrimidine metabolism; UMP biosynthesis via de novo pathway. Catalyzes the conversion of dihydroorotate to orotate with fumarate as the electron acceptor. This Streptococcus equi subsp. equi (strain 4047) protein is Putative dihydroorotate dehydrogenase A (fumarate) (pyrD).